Consider the following 395-residue polypeptide: Serine-type anaerobic sulfatase-maturating enzyme (395 aa).

The Radical SAM core domain maps to 18-249 (PRSPVPFHIL…QWRKRCDRGR (232 aa)). The [4Fe-4S] cluster site is built by Cys-35 and Cys-39. An S-adenosyl-L-methionine-binding site is contributed by Tyr-41. A [4Fe-4S] cluster-binding site is contributed by Cys-42. Residues Gly-84 and Arg-152 each coordinate S-adenosyl-L-methionine. [4Fe-4S] cluster-binding residues include Cys-270, Cys-276, and Cys-291. The Proton acceptor role is filled by Asp-292. [4Fe-4S] cluster is bound by residues Cys-331, Cys-334, Cys-340, Cys-344, and Cys-357.

Belongs to the radical SAM superfamily. Anaerobic sulfatase-maturating enzyme family. Monomer. Interacts with AtsA prior to its export to the periplasm. This interaction depends on the presence of AtsA 'Ser-72'. Binding of SAM to AtsB promotes the formation of a ternary AtsA-AtsB-SAM complex. [4Fe-4S] cluster is required as a cofactor.

It localises to the cytoplasm. It catalyses the reaction L-seryl-[sulfatase] + S-adenosyl-L-methionine = 3-oxo-L-alanyl-[sulfatase] + 5'-deoxyadenosine + L-methionine + H(+). Its pathway is protein modification; sulfatase oxidation. With respect to regulation, activity is inhibited by iron chelators. Involved in 'Ser-type' sulfatase maturation under anaerobic conditions. Catalyzes the post-translational modification of serine ('Ser-72' in the arylsulfatase AtsA) into 3-oxoalanine (also known as C(alpha)-formylglycine (FGly)), by a free radical chemical mechanism initiated via the reductive cleavage of S-adenosyl-L-methionine (SAM). Is capable of catalyzing multiple turnovers. In vitro, use of a peptide substrate in which the target serine is changed to cysteine also gives rise to turnover, supporting approximately 4-fold the activity of that observed with the natural substrate. The polypeptide is Serine-type anaerobic sulfatase-maturating enzyme (Klebsiella pneumoniae).